A 132-amino-acid chain; its full sequence is Small ribosomal subunit protein uS8 (132 aa).

The protein belongs to the universal ribosomal protein uS8 family. Part of the 30S ribosomal subunit. Contacts proteins S5 and S12.

One of the primary rRNA binding proteins, it binds directly to 16S rRNA central domain where it helps coordinate assembly of the platform of the 30S subunit. This chain is Small ribosomal subunit protein uS8, found in Borreliella burgdorferi (strain ZS7) (Borrelia burgdorferi).